Consider the following 417-residue polypeptide: MDKLIIKGGKKLTGDVSVSGSKNAALPVFISTILAPGLNEIRNVPFLRDINTTIKVLESLGAVVEGNGNIVKIDTTHVNDVEATYDLVKTMRASVLVLGPLLARHGRARVSLPGGCAIGARPINLHLKGLAALGADIRLEHGYVEAKAKKLKGARINFDIATVGGTEQLMMAAALAKGETILENAAREPEIIDLADILNRMGARIDGAGTDTIRIIGVKELAPVVHDVMPDRIEAGTFMVAAAITGGDIKIHNMKLEHLDALVFKLQDAGVEIINRDNVVRVKGPRRPRAINIKTRPYPGFPTDMQAQFMALMCVADGASVISENIFENRFMHVSELLRFGADITIEGNTATVKGVKKLSGAPVMATDLRASASLILAGLAADNTTEISRIYHLDRGYDSIEKKLAGLGADIKRVKE.

22-23 lines the phosphoenolpyruvate pocket; the sequence is KN. Arg92 is a binding site for UDP-N-acetyl-alpha-D-glucosamine. The Proton donor role is filled by Cys116. Cys116 carries the 2-(S-cysteinyl)pyruvic acid O-phosphothioketal modification. UDP-N-acetyl-alpha-D-glucosamine-binding residues include Asp304 and Ile326.

It belongs to the EPSP synthase family. MurA subfamily.

The protein localises to the cytoplasm. The catalysed reaction is phosphoenolpyruvate + UDP-N-acetyl-alpha-D-glucosamine = UDP-N-acetyl-3-O-(1-carboxyvinyl)-alpha-D-glucosamine + phosphate. The protein operates within cell wall biogenesis; peptidoglycan biosynthesis. In terms of biological role, cell wall formation. Adds enolpyruvyl to UDP-N-acetylglucosamine. This chain is UDP-N-acetylglucosamine 1-carboxyvinyltransferase, found in Geobacter metallireducens (strain ATCC 53774 / DSM 7210 / GS-15).